We begin with the raw amino-acid sequence, 216 residues long: Octanoyltransferase (216 aa).

Residues 29-209 (DRAGECVWLL…SFDAVFGPCP (181 aa)) enclose the BPL/LPL catalytic domain. Residues 68 to 75 (RGGQYTYH), 140 to 142 (AIG), and 153 to 155 (GFA) contribute to the substrate site. Catalysis depends on cysteine 171, which acts as the Acyl-thioester intermediate.

Belongs to the LipB family.

It is found in the cytoplasm. The catalysed reaction is octanoyl-[ACP] + L-lysyl-[protein] = N(6)-octanoyl-L-lysyl-[protein] + holo-[ACP] + H(+). It functions in the pathway protein modification; protein lipoylation via endogenous pathway; protein N(6)-(lipoyl)lysine from octanoyl-[acyl-carrier-protein]: step 1/2. Functionally, catalyzes the transfer of endogenously produced octanoic acid from octanoyl-acyl-carrier-protein onto the lipoyl domains of lipoate-dependent enzymes. Lipoyl-ACP can also act as a substrate although octanoyl-ACP is likely to be the physiological substrate. The protein is Octanoyltransferase of Rhodospirillum rubrum (strain ATCC 11170 / ATH 1.1.1 / DSM 467 / LMG 4362 / NCIMB 8255 / S1).